The following is a 324-amino-acid chain: Porphobilinogen deaminase 1 (324 aa).

The residue at position 249 (C249) is an S-(dipyrrolylmethanemethyl)cysteine.

This sequence belongs to the HMBS family. As to quaternary structure, monomer. Dipyrromethane is required as a cofactor.

The enzyme catalyses 4 porphobilinogen + H2O = hydroxymethylbilane + 4 NH4(+). It functions in the pathway porphyrin-containing compound metabolism; protoporphyrin-IX biosynthesis; coproporphyrinogen-III from 5-aminolevulinate: step 2/4. Functionally, tetrapolymerization of the monopyrrole PBG into the hydroxymethylbilane pre-uroporphyrinogen in several discrete steps. The polypeptide is Porphobilinogen deaminase 1 (hemC1) (Streptomyces avermitilis (strain ATCC 31267 / DSM 46492 / JCM 5070 / NBRC 14893 / NCIMB 12804 / NRRL 8165 / MA-4680)).